We begin with the raw amino-acid sequence, 185 residues long: UPF0215 protein APE_0476.1 (185 aa).

It belongs to the UPF0215 family.

This chain is UPF0215 protein APE_0476.1, found in Aeropyrum pernix (strain ATCC 700893 / DSM 11879 / JCM 9820 / NBRC 100138 / K1).